We begin with the raw amino-acid sequence, 219 residues long: Probable transaldolase (219 aa).

Lys-83 acts as the Schiff-base intermediate with substrate in catalysis.

The protein belongs to the transaldolase family. Type 3B subfamily.

It is found in the cytoplasm. It catalyses the reaction D-sedoheptulose 7-phosphate + D-glyceraldehyde 3-phosphate = D-erythrose 4-phosphate + beta-D-fructose 6-phosphate. It functions in the pathway carbohydrate degradation; pentose phosphate pathway; D-glyceraldehyde 3-phosphate and beta-D-fructose 6-phosphate from D-ribose 5-phosphate and D-xylulose 5-phosphate (non-oxidative stage): step 2/3. Functionally, transaldolase is important for the balance of metabolites in the pentose-phosphate pathway. The protein is Probable transaldolase of Cereibacter sphaeroides (strain ATCC 17025 / ATH 2.4.3) (Rhodobacter sphaeroides).